The following is a 686-amino-acid chain: XK-related protein 5 (686 aa).

5 helical membrane-spanning segments follow: residues 33–53, 205–225, 239–259, 265–285, and 297–317; these read LLWG…QALS, HFWV…WLVA, LFNL…WDSP, VTFY…ATDF, and IAGV…YYSL. 3 disordered regions span residues 339-387, 448-468, and 490-592; these read GDKT…PPEA, ALSA…LENS, and FASD…APFP. The span at 340–359 shows a compositional bias: basic and acidic residues; sequence DKTERRDSPRATDLAGKRTE. Polar residues-rich tracts occupy residues 450–468 and 490–509; these read SAQQ…LENS and FASD…TQGE. Positions 523 to 536 are enriched in gly residues; sequence QGKGTGGQQRGGEG. Positions 550 to 567 are enriched in polar residues; that stretch reads VATSSQQEGSPATLQTAH.

It belongs to the XK family.

It localises to the cell membrane. This chain is XK-related protein 5, found in Homo sapiens (Human).